Consider the following 263-residue polypeptide: Bradykinin-potentiating and C-type natriuretic peptides (263 aa).

Positions 1–23 (MFVSRLAASGLLLLALMALSLDG) are cleaved as a signal peptide. A propeptide spanning residues 24–30 (KPVQQWS) is cleaved from the precursor. Position 31 is a pyrrolidone carboxylic acid (glutamine 31). The propeptide occupies 42–48 (LVVQQWS). Glutamine 49 is modified (pyrrolidone carboxylic acid). Positions 60–66 (LVVQQWS) are excised as a propeptide. Position 67 is a pyrrolidone carboxylic acid (glutamine 67). A propeptide spanning residues 78-84 (LVVQQWS) is cleaved from the precursor. Glutamine 85 carries the pyrrolidone carboxylic acid modification. The segment at 89–95 (PRPKIPP) is angiotensin-converting enzyme active site binding. The propeptide occupies 96–102 (LVVQQWS). Residue glutamine 103 is modified to Pyrrolidone carboxylic acid. Residues 107-113 (PRPKIPP) are angiotensin-converting enzyme active site binding. The propeptide occupies 114-116 (LVV). Residue glutamine 117 is modified to Pyrrolidone carboxylic acid. Residues 128–130 (LLL) constitute a propeptide that is removed on maturation. At glutamine 131 the chain carries Pyrrolidone carboxylic acid. Positions 137–241 (AGGTTALREE…ARRLKGLVKK (105 aa)) are excised as a propeptide. 2 disordered regions span residues 152 to 171 (EAAS…GSKA) and 177 to 205 (RLSK…GKQA). Over residues 181–192 (SKGASATSASAS) the composition is skewed to low complexity. The span at 194–204 (PMRDLRTDGKQ) shows a compositional bias: basic and acidic residues. Cysteine 247 and cysteine 263 are oxidised to a cystine.

The protein in the N-terminal section; belongs to the bradykinin-potentiating peptide family. This sequence in the C-terminal section; belongs to the natriuretic peptide family. In terms of tissue distribution, expressed by the venom gland.

It is found in the secreted. In terms of biological role, inhibits the rabbit lung angiotensin-converting enzyme (ACE) (IC(50)=15 uM). Contracts the rat gastric fundus smooth muscle in a rapid and transient manner. Causes no contraction of the rat gastric fundus smooth muscle even at high concentrations. Causes very weak contraction of the isolated guinea pig ileum. Causes weak contraction on rat uterus. Its function is as follows. Inhibits the activity of the angiotensin-converting enzyme (ACE) by a preferential interaction with its C-domain (Ki=30 nM, IC(50)=1.1 uM). It binds ACE in a zinc-independent manner. Also potentiates the hypotensive effects of bradykinin. Causes high contraction of the isolated guinea pig ileum and weak contraction on rat uterus. Functionally, inhibits the activity of the angiotensin-converting enzyme (ACE) by interacting with the same potency to its C- and N-domains. Inhibits the rabbit lung angiotensin-converting enzyme (ACE) (IC(50)=7.1 uM). Causes weak contraction of the isolated guinea pig ileum. Causes weak contraction on rat uterus. In terms of biological role, inhibits the rabbit lung angiotensin-converting enzyme (ACE) (IC(50)=46 uM). Synthetic Leu3-blomhotin contracts the rat gastric fundus smooth muscle in a rapid and transient manner. Causes moderate contraction of the isolated guinea pig ileum. Causes weak contraction on rat uterus. Causes weak contraction of the isolated guinea pig ileum. Causes about 50-fold more potentiating activity on rat uterus than on guinea pig ileum. Its function is as follows. Synthetic peptide potentiates the bradykinin in vivo. Functionally, synthetic peptide does not show any bradykinin-potentiating effects. In terms of biological role, has a vasorelaxant activity in rat aortic strips and a diuretic potency in anesthetized rats. May act by activating natriuretic receptors (NPR1 and/or NPR2). The polypeptide is Bradykinin-potentiating and C-type natriuretic peptides (Gloydius blomhoffii (Mamushi)).